A 480-amino-acid chain; its full sequence is Ammonium transporter 2 member 4 (480 aa).

Residues 1–27 (MELPSNLLPDEASPEWMNKGDNAWQLT) are Extracellular-facing. Residues 28–48 (AATMVGLQSIPGLVILYGSLV) traverse the membrane as a helical segment. The Cytoplasmic segment spans residues 49–51 (KKT). A helical membrane pass occupies residues 52-72 (WAINSAFMAFYAFASVLLCWV). The Extracellular segment spans residues 73-113 (SWAYQMSFGEKMVFFLGKPNVALDEKFLLGKAFLGNFPNAT). The N-linked (GlcNAc...) asparagine glycan is linked to Asn-111. The chain crosses the membrane as a helical span at residues 114 to 134 (MVFYQGVFAGLTLILIAGALL). Over 135-141 (GRMNIRA) the chain is Cytoplasmic. Residues 142-162 (WMLFVPLWVTFSYTVVAFSIW) traverse the membrane as a helical segment. The Extracellular portion of the chain corresponds to 163–175 (CPDGWLAKRGVID). A helical membrane pass occupies residues 176-196 (FAGGYVIHLSAGVAGFTAAYW). Residues 197 to 214 (VGPRADKDRETFPAATNN) lie on the Cytoplasmic side of the membrane. Residues 215 to 235 (MIMVLAGAGLLWMGWSGFNGG) traverse the membrane as a helical segment. Residues 236 to 242 (APFVAST) lie on the Extracellular side of the membrane. Residues 243-263 (IASLAILNTHVCTAASITVWV) form a helical membrane-spanning segment. The Cytoplasmic portion of the chain corresponds to 264 to 274 (MLDTFYFGKPT). Residues 275–295 (VFGAVQGMITGLVCITPAAGV) form a helical membrane-spanning segment. The Extracellular segment spans residues 296-298 (VQG). A helical membrane pass occupies residues 299 to 319 (WAAILMGFISGSIPWYTMMVL). At 320-334 (HNKVNFLKKIDDPMA) the chain is on the cytoplasmic side. A helical membrane pass occupies residues 335-355 (VFHTHAIAGALGGILTGFFAV). The Extracellular segment spans residues 356–394 (PKLCRLFYMVPDWEKYIGLAYGLQNKGATQAGLKQMVIQ). A helical membrane pass occupies residues 395–415 (IEAIVFVICYNVLMTSLICLI). Over 416–480 (VRVIVPLRLN…SRSLGELQMV (65 aa)) the chain is Cytoplasmic.

The protein belongs to the ammonia transporter channel (TC 1.A.11.2) family.

The protein resides in the cell membrane. Its function is as follows. Involved in ammonium transport. May be involved in arbuscular mycorrhizal (AM) symbiosis with AM fungi. In Medicago truncatula (Barrel medic), this protein is Ammonium transporter 2 member 4.